We begin with the raw amino-acid sequence, 326 residues long: Guanine nucleotide-binding protein subunit beta-like protein 1 (326 aa).

6 WD repeats span residues 17–61 (GTQS…IVTT), 64–104 (GHGG…NTIM), 159–202 (ARPG…VCSQ), 205–244 (CHEEPVMGLDFDSQKAKGISGSAGKVLAVWSLDDQQSLQV), 250–291 (LTNP…AVLA), and 292–325 (FHSAPVYCVAFAADGLLAAGSKDQRISIWSLYPC).

Expressed at low levels in most tissues and highly expressed in adult testis. Widely expressed in adult brain with striking regional distribution in forebrain, midbrain, and hindbrain structures, including the thalamus, hypothalamus, amygdala, hippocampus, pons.

The protein resides in the cytoplasm. The protein localises to the nucleus. In terms of biological role, acts as a critical regulator of DNA damage response (DDR) signaling via specifically regulating phosphatidylinositol 3-kinase-related protein kinase (PIKK) family proteins. The chain is Guanine nucleotide-binding protein subunit beta-like protein 1 (Gnb1l) from Mus musculus (Mouse).